A 351-amino-acid chain; its full sequence is GDP-mannose 4,6-dehydratase (351 aa).

NADP(+) is bound by residues 11–16 (GVTGQD), 66–67 (DM), 88–92 (LAAQS), and Y103. T135 is an active-site residue. Active-site nucleophile residues include E137 and Y159. NADP(+)-binding residues include K163, H189, and R194.

This sequence belongs to the NAD(P)-dependent epimerase/dehydratase family. GDP-mannose 4,6-dehydratase subfamily. NADP(+) is required as a cofactor.

The catalysed reaction is GDP-alpha-D-mannose = GDP-4-dehydro-alpha-D-rhamnose + H2O. It functions in the pathway nucleotide-sugar biosynthesis; GDP-L-fucose biosynthesis via de novo pathway; GDP-L-fucose from GDP-alpha-D-mannose: step 1/2. Functionally, catalyzes the conversion of GDP-D-mannose to GDP-4-dehydro-6-deoxy-D-mannose. In Sinorhizobium fredii (strain HH103), this protein is GDP-mannose 4,6-dehydratase.